Reading from the N-terminus, the 149-residue chain is Ribosome-binding factor A (149 aa).

Over residues 116 to 125 (TLFEELHPNP) the composition is skewed to basic and acidic residues. The tract at residues 116 to 149 (TLFEELHPNPEEDDGDTDAETLLEDSESGIERET) is disordered. Residues 126–143 (EEDDGDTDAETLLEDSES) show a composition bias toward acidic residues.

It belongs to the RbfA family. Monomer. Binds 30S ribosomal subunits, but not 50S ribosomal subunits or 70S ribosomes.

The protein localises to the cytoplasm. Functionally, one of several proteins that assist in the late maturation steps of the functional core of the 30S ribosomal subunit. Associates with free 30S ribosomal subunits (but not with 30S subunits that are part of 70S ribosomes or polysomes). Required for efficient processing of 16S rRNA. May interact with the 5'-terminal helix region of 16S rRNA. The protein is Ribosome-binding factor A of Leptospira biflexa serovar Patoc (strain Patoc 1 / Ames).